The primary structure comprises 235 residues: TIR domain-containing adapter molecule 2 (235 aa).

Positions 1 to 39 (MGIGKSKINSCPLSLSWGKRHSVDTSPGYHESDSKKSED) are disordered. The N-myristoyl glycine moiety is linked to residue Gly2. Ser16 is subject to Phosphoserine; by PKC/PRKCE. The segment covering 30 to 39 (HESDSKKSED) has biased composition (basic and acidic residues). A TIR domain is found at 73-229 (AEEEVFLKFV…TIWKETRNMV (157 aa)). Tyr167 carries the phosphotyrosine modification.

As to quaternary structure, homodimer. Interacts with TLR4, TICAM1, IRF3 and IRF7 in response to LPS. Interacts with IL1R1, IL1RAP, IRAK2, IRAK3 and TRAF6. Interacts with protein kinase-inactive mutants of IRAK1 and IRAK4. Isoform 1 interacts with isoform 2; the interaction occurs in late endosomes and disrupts the interaction between isoform 1 and TICAM1. Interacts with MYD88; the interaction decreases after IL-18 stimulation in a time-dependent manner. Interacts with IL18R1 and IL18RAP. Interacts with TLR2. Interacts with RAB11FIP2. In terms of processing, phosphorylated by PRKCE in response to LPS. Phosphorylation is essential for its function. It is depleted from the membrane upon phosphorylation. Tyrosine phosphorylation is inhibited by phosphatase PTPN4. Isoform 1 is myristoylated. Required for membrane association which is critical for its ability to initiate efficient signaling. Expressed in spleen, prostate, testis, uterus, small intestine, colon, peripheral blood leukocytes, heart, placenta, lung, liver, skeletal muscle, and pancreas Isoform 2 is ubiquitously expressed (at lower levels than isoform 1).

The protein localises to the cytoplasm. It is found in the golgi apparatus. The protein resides in the cell membrane. It localises to the endoplasmic reticulum. Its subcellular location is the early endosome membrane. The protein localises to the late endosome membrane. It is found in the cell projection. The protein resides in the phagocytic cup. Its function is as follows. Functions as a sorting adapter in different signaling pathways to facilitate downstream signaling leading to type I interferon induction. In TLR4 signaling, physically bridges TLR4 and TICAM1 and functionally transmits signal to TICAM1 in early endosomes after endocytosis of TLR4. In TLR2 signaling, physically bridges TLR2 and MYD88 and is required for the TLR2-dependent movement of MYD88 to endosomes following ligand engagement. Involved in IL-18 signaling and is proposed to function as a sorting adapter for MYD88 in IL-18 signaling during adaptive immune response. Forms a complex with RAB11FIP2 that is recruited to the phagosomes to promote the activation of the actin-regulatory GTPases RAC1 and CDC42 and subsequent phagocytosis of Gram-negative bacteria. In terms of biological role, proposed to inhibit LPS-TLR4 signaling at the late endosome by interaction with isoform 1 thereby disrupting the association of isoform 1 with TICAM1. May be involved in TLR4 degradation in late endosomes. The polypeptide is TIR domain-containing adapter molecule 2 (TICAM2) (Homo sapiens (Human)).